The primary structure comprises 222 residues: N-(5'-phosphoribosyl)anthranilate isomerase (222 aa).

It belongs to the TrpF family.

It carries out the reaction N-(5-phospho-beta-D-ribosyl)anthranilate = 1-(2-carboxyphenylamino)-1-deoxy-D-ribulose 5-phosphate. It functions in the pathway amino-acid biosynthesis; L-tryptophan biosynthesis; L-tryptophan from chorismate: step 3/5. The polypeptide is N-(5'-phosphoribosyl)anthranilate isomerase (Rhizobium johnstonii (strain DSM 114642 / LMG 32736 / 3841) (Rhizobium leguminosarum bv. viciae)).